Here is a 236-residue protein sequence, read N- to C-terminus: Small ribosomal subunit protein uS3 (236 aa).

The KH type-2 domain occupies 39–107 (IRLYVLEELK…ETSLNIVEIH (69 aa)). Residues 216 to 236 (ERRAAEVDHSGSSSNRRRENA) are disordered.

Belongs to the universal ribosomal protein uS3 family. Part of the 30S ribosomal subunit. Forms a tight complex with proteins S10 and S14.

Functionally, binds the lower part of the 30S subunit head. Binds mRNA in the 70S ribosome, positioning it for translation. This is Small ribosomal subunit protein uS3 from Bartonella henselae (strain ATCC 49882 / DSM 28221 / CCUG 30454 / Houston 1) (Rochalimaea henselae).